The chain runs to 218 residues: Ribose-5-phosphate isomerase A (218 aa).

Substrate is bound by residues 28 to 31, 81 to 84, and 94 to 97; these read SGST, DGAD, and KGKG. Residue Glu103 is the Proton acceptor of the active site. Lys121 is a binding site for substrate.

The protein belongs to the ribose 5-phosphate isomerase family. In terms of assembly, homodimer.

The enzyme catalyses aldehydo-D-ribose 5-phosphate = D-ribulose 5-phosphate. It participates in carbohydrate degradation; pentose phosphate pathway; D-ribose 5-phosphate from D-ribulose 5-phosphate (non-oxidative stage): step 1/1. Functionally, catalyzes the reversible conversion of ribose-5-phosphate to ribulose 5-phosphate. This Wigglesworthia glossinidia brevipalpis protein is Ribose-5-phosphate isomerase A.